The primary structure comprises 487 residues: ATP-dependent RNA helicase DBP3 (487 aa).

A disordered region spans residues 1-40; it reads MAKRSRNMESNSERSSRPKKKSKGDAKPEQPPYVQSAELD. The short motif at 71–98 is the Q motif element; the sequence is TAFSYLPSDSNQLYGPLEHFSKPTPIQS. Positions 101–276 constitute a Helicase ATP-binding domain; that stretch reads WPYLFAGRDV…TTFMKEPVTV (176 aa). ATP is bound at residue 114–121; sequence AETGSGKT. A DEAD box motif is present at residues 222–225; the sequence is DEAD. Residues 291 to 456 form the Helicase C-terminal domain; the sequence is RIKQIVEVVK…DIPEALLKFG (166 aa).

The protein belongs to the DEAD box helicase family. DDX5/DBP2 subfamily.

It localises to the nucleus. It is found in the nucleolus. The enzyme catalyses ATP + H2O = ADP + phosphate + H(+). In terms of biological role, ATP-dependent RNA helicase required for 60S ribosomal subunit synthesis. Involved in efficient pre-rRNA processing, predominantly at site A3, which is necessary for the normal formation of 25S and 5.8S rRNAs. The protein is ATP-dependent RNA helicase DBP3 (DBP3) of Ajellomyces capsulatus (strain NAm1 / WU24) (Darling's disease fungus).